The following is a 440-amino-acid chain: Chromosomal replication initiator protein DnaA (440 aa).

Residues 1 to 74 (MNPSQILENL…VQSGNKAIIN (74 aa)) form a domain I, interacts with DnaA modulators region. The interval 74–99 (NIQAQSTKQSNKSTKIDIAHIQAQST) is domain II. The domain III, AAA+ region stretch occupies residues 100-316 (ILNPSFTFES…GIIISLNAYA (217 aa)). Residues glycine 146, glycine 148, lysine 149, and threonine 150 each contribute to the ATP site. Residues 317 to 440 (TILGQEITLE…KNKILIKSQS (124 aa)) are domain IV, binds dsDNA.

The protein belongs to the DnaA family. As to quaternary structure, oligomerizes as a right-handed, spiral filament on DNA at oriC.

It localises to the cytoplasm. Its function is as follows. Plays an essential role in the initiation and regulation of chromosomal replication. ATP-DnaA binds to the origin of replication (oriC) to initiate formation of the DNA replication initiation complex once per cell cycle. Binds the DnaA box (a 9 base pair repeat at the origin) and separates the double-stranded (ds)DNA. Forms a right-handed helical filament on oriC DNA; dsDNA binds to the exterior of the filament while single-stranded (ss)DNA is stabiized in the filament's interior. The ATP-DnaA-oriC complex binds and stabilizes one strand of the AT-rich DNA unwinding element (DUE), permitting loading of DNA polymerase. After initiation quickly degrades to an ADP-DnaA complex that is not apt for DNA replication. Binds acidic phospholipids. This is Chromosomal replication initiator protein DnaA from Campylobacter jejuni subsp. doylei (strain ATCC BAA-1458 / RM4099 / 269.97).